Consider the following 478-residue polypeptide: Multidrug resistance outer membrane protein MdtQ (478 aa).

An N-terminal signal peptide occupies residues 1-21 (MNRDSFYPAIACFPLLLMLAG). Cysteine 22 is lipidated: N-palmitoyl cysteine. Cysteine 22 carries S-diacylglycerol cysteine lipidation.

This sequence belongs to the outer membrane factor (OMF) (TC 1.B.17) family.

It localises to the cell outer membrane. Could be involved in resistance to puromycin, acriflavine and tetraphenylarsonium chloride. The protein is Multidrug resistance outer membrane protein MdtQ (mdtQ) of Escherichia coli O157:H7.